Here is a 208-residue protein sequence, read N- to C-terminus: Crossover junction endodeoxyribonuclease RuvC (208 aa).

Residues Asp-9, Glu-70, and Asp-143 contribute to the active site. Mg(2+)-binding residues include Asp-9, Glu-70, and Asp-143.

It belongs to the RuvC family. As to quaternary structure, homodimer which binds Holliday junction (HJ) DNA. The HJ becomes 2-fold symmetrical on binding to RuvC with unstacked arms; it has a different conformation from HJ DNA in complex with RuvA. In the full resolvosome a probable DNA-RuvA(4)-RuvB(12)-RuvC(2) complex forms which resolves the HJ. Mg(2+) is required as a cofactor.

It is found in the cytoplasm. The enzyme catalyses Endonucleolytic cleavage at a junction such as a reciprocal single-stranded crossover between two homologous DNA duplexes (Holliday junction).. The RuvA-RuvB-RuvC complex processes Holliday junction (HJ) DNA during genetic recombination and DNA repair. Endonuclease that resolves HJ intermediates. Cleaves cruciform DNA by making single-stranded nicks across the HJ at symmetrical positions within the homologous arms, yielding a 5'-phosphate and a 3'-hydroxyl group; requires a central core of homology in the junction. The consensus cleavage sequence is 5'-(A/T)TT(C/G)-3'. Cleavage occurs on the 3'-side of the TT dinucleotide at the point of strand exchange. HJ branch migration catalyzed by RuvA-RuvB allows RuvC to scan DNA until it finds its consensus sequence, where it cleaves and resolves the cruciform DNA. This is Crossover junction endodeoxyribonuclease RuvC from Leifsonia xyli subsp. xyli (strain CTCB07).